A 466-amino-acid polypeptide reads, in one-letter code: MITLYNTLTRQKEVFKPIEPGKVKMYVCGPTVYNYIHIGNARPAINYDVVRRYFEYQGYNVEYVSNFTDVDDKLIKRSQELNQTVPEIAEKYIAAFHEDVGALNVRKATSNPRVMDHMDDIIQFIKDLVDQGYAYESGGDVYFRTRKFEGYGKLSHQSIDDLKVGARIDAGEHKEDALDFTLWKKAKPGEISWDSPFGEGRPGWHIECSVMAFHELGPTIDIHAGGSDLQFPHHENEIAQSEAHNHAPFSNYWMHNGFINIDNEKMSKSLGNFILVHDIIKEVDPDVLRFFMISVHYRSPINYNLELVESARSGLERIRNSYQLIEERAQIATNIENQQTYIDQIDAILNRFETVMNDDFNTANAITAWYDLAKLANKYVLENTTSTEVIDKFKAVYQIFSDVLGVPLKSKNADELLDEDVEKLIEERNEARKNKDFARADEIRDMLKSQNIILEDTPQGVRFKRG.

Residue cysteine 28 coordinates Zn(2+). Residues proline 30–asparagine 40 carry the 'HIGH' region motif. Cysteine 208, histidine 233, and glutamate 237 together coordinate Zn(2+). Positions lysine 265–serine 269 match the 'KMSKS' region motif. Lysine 268 provides a ligand contact to ATP.

Belongs to the class-I aminoacyl-tRNA synthetase family. In terms of assembly, monomer. Requires Zn(2+) as cofactor.

Its subcellular location is the cytoplasm. The catalysed reaction is tRNA(Cys) + L-cysteine + ATP = L-cysteinyl-tRNA(Cys) + AMP + diphosphate. This Staphylococcus aureus (strain bovine RF122 / ET3-1) protein is Cysteine--tRNA ligase.